Reading from the N-terminus, the 310-residue chain is Aspartate carbamoyltransferase catalytic subunit (310 aa).

Carbamoyl phosphate contacts are provided by arginine 57 and threonine 58. Lysine 86 is an L-aspartate binding site. Residues arginine 107, histidine 135, and glutamine 138 each coordinate carbamoyl phosphate. L-aspartate contacts are provided by arginine 168 and arginine 229. Leucine 268 and proline 269 together coordinate carbamoyl phosphate.

The protein belongs to the aspartate/ornithine carbamoyltransferase superfamily. ATCase family. Heterooligomer of catalytic and regulatory chains.

It carries out the reaction carbamoyl phosphate + L-aspartate = N-carbamoyl-L-aspartate + phosphate + H(+). It functions in the pathway pyrimidine metabolism; UMP biosynthesis via de novo pathway; (S)-dihydroorotate from bicarbonate: step 2/3. Catalyzes the condensation of carbamoyl phosphate and aspartate to form carbamoyl aspartate and inorganic phosphate, the committed step in the de novo pyrimidine nucleotide biosynthesis pathway. This is Aspartate carbamoyltransferase catalytic subunit from Thermococcus onnurineus (strain NA1).